The chain runs to 169 residues: Ribosome maturation factor RimM (169 aa).

The PRC barrel domain occupies 97 to 169 (EDEVYFKDLI…KIVVDWEYDY (73 aa)).

Belongs to the RimM family. Binds ribosomal protein uS19.

It localises to the cytoplasm. Its function is as follows. An accessory protein needed during the final step in the assembly of 30S ribosomal subunit, possibly for assembly of the head region. Essential for efficient processing of 16S rRNA. May be needed both before and after RbfA during the maturation of 16S rRNA. It has affinity for free ribosomal 30S subunits but not for 70S ribosomes. In Francisella tularensis subsp. tularensis (strain FSC 198), this protein is Ribosome maturation factor RimM.